A 43-amino-acid chain; its full sequence is Cytochrome b559 subunit beta (43 aa).

A helical transmembrane segment spans residues 18-34; it reads WLSVHALGIPTIFFLGA. Position 22 (His-22) interacts with heme.

The protein belongs to the PsbE/PsbF family. In terms of assembly, heterodimer of an alpha subunit and a beta subunit. PSII is composed of 1 copy each of membrane proteins PsbA, PsbB, PsbC, PsbD, PsbE, PsbF, PsbH, PsbI, PsbJ, PsbK, PsbL, PsbM, PsbT, PsbX, PsbY, PsbZ, Psb30/Ycf12, at least 3 peripheral proteins of the oxygen-evolving complex and a large number of cofactors. It forms dimeric complexes. The cofactor is heme b.

The protein localises to the plastid. Its subcellular location is the chloroplast thylakoid membrane. This b-type cytochrome is tightly associated with the reaction center of photosystem II (PSII). PSII is a light-driven water:plastoquinone oxidoreductase that uses light energy to abstract electrons from H(2)O, generating O(2) and a proton gradient subsequently used for ATP formation. It consists of a core antenna complex that captures photons, and an electron transfer chain that converts photonic excitation into a charge separation. This chain is Cytochrome b559 subunit beta, found in Stigeoclonium helveticum (Green alga).